The primary structure comprises 189 residues: Cold-regulated 413 plasma membrane protein 3 (189 aa).

Topologically, residues 1–24 (MENIEYLNEIQAVAGKLIHSYGVP) are extracellular. A helical transmembrane segment spans residues 25–45 (VMITLFLRWLASIVAVFLMIL). Residues 46 to 55 (DQTKWKYSNN) lie on the Cytoplasmic side of the membrane. Residues 56-76 (IMASLLAPYLFSSLPIVIFQV) form a helical membrane-spanning segment. The Extracellular segment spans residues 77-79 (LRN). Residues 80 to 100 (GVGKWIALLTVILRLFLPNHF) traverse the membrane as a helical segment. Residues 101 to 104 (HESL) lie on the Cytoplasmic side of the membrane. Residues 105-125 (EIPGATILLIVVTPSDIGAIF) traverse the membrane as a helical segment. Over 126-168 (RDDLRYTGGDVCLLTSFYLINKHTKACGGIKNSFTQKDKVTYS) the chain is Extracellular. Residues 169–189 (ICLWILFVYPILSSFAALFYL) form a helical membrane-spanning segment.

Belongs to the Cold-regulated 413 protein family.

It localises to the cell membrane. The protein is Cold-regulated 413 plasma membrane protein 3 of Arabidopsis thaliana (Mouse-ear cress).